A 330-amino-acid polypeptide reads, in one-letter code: Glycerol-3-phosphate dehydrogenase [NAD(P)+] (330 aa).

Residues W11, R33, and K105 each coordinate NADPH. Sn-glycerol 3-phosphate contacts are provided by K105, G133, and S135. A137 provides a ligand contact to NADPH. Residues K188, D241, S251, R252, and N253 each coordinate sn-glycerol 3-phosphate. K188 (proton acceptor) is an active-site residue. Position 252 (R252) interacts with NADPH. NADPH-binding residues include V276 and E278.

It belongs to the NAD-dependent glycerol-3-phosphate dehydrogenase family.

It is found in the cytoplasm. The enzyme catalyses sn-glycerol 3-phosphate + NAD(+) = dihydroxyacetone phosphate + NADH + H(+). It carries out the reaction sn-glycerol 3-phosphate + NADP(+) = dihydroxyacetone phosphate + NADPH + H(+). It participates in membrane lipid metabolism; glycerophospholipid metabolism. Its function is as follows. Catalyzes the reduction of the glycolytic intermediate dihydroxyacetone phosphate (DHAP) to sn-glycerol 3-phosphate (G3P), the key precursor for phospholipid synthesis. In Acidovorax ebreus (strain TPSY) (Diaphorobacter sp. (strain TPSY)), this protein is Glycerol-3-phosphate dehydrogenase [NAD(P)+].